The sequence spans 194 residues: Holliday junction branch migration complex subunit RuvA (194 aa).

The domain I stretch occupies residues 1 to 64; it reads MISRLTGKLV…EDAHLLFGFA (64 aa). The tract at residues 65 to 143 is domain II; it reads TAEERKTFRQ…AHTVTDGLFA (79 aa). The segment at 144 to 147 is flexible linker; the sequence is AAPA. The domain III stretch occupies residues 147-194; the sequence is AADETEDIVSTLLALGYSEREAKAAVKGVPEGTDVGEGVRLALKNLLK.

This sequence belongs to the RuvA family. In terms of assembly, homotetramer. Forms an RuvA(8)-RuvB(12)-Holliday junction (HJ) complex. HJ DNA is sandwiched between 2 RuvA tetramers; dsDNA enters through RuvA and exits via RuvB. An RuvB hexamer assembles on each DNA strand where it exits the tetramer. Each RuvB hexamer is contacted by two RuvA subunits (via domain III) on 2 adjacent RuvB subunits; this complex drives branch migration. In the full resolvosome a probable DNA-RuvA(4)-RuvB(12)-RuvC(2) complex forms which resolves the HJ.

It localises to the cytoplasm. The RuvA-RuvB-RuvC complex processes Holliday junction (HJ) DNA during genetic recombination and DNA repair, while the RuvA-RuvB complex plays an important role in the rescue of blocked DNA replication forks via replication fork reversal (RFR). RuvA specifically binds to HJ cruciform DNA, conferring on it an open structure. The RuvB hexamer acts as an ATP-dependent pump, pulling dsDNA into and through the RuvAB complex. HJ branch migration allows RuvC to scan DNA until it finds its consensus sequence, where it cleaves and resolves the cruciform DNA. This chain is Holliday junction branch migration complex subunit RuvA, found in Neisseria meningitidis serogroup C (strain 053442).